Here is a 796-residue protein sequence, read N- to C-terminus: Armadillo repeat-containing protein wrm-1 (796 aa).

The interval 17 to 59 is disordered; sequence NFNPMTPSTSRVSTPVRPSSTMSARQYSGSPFKAQPQNMEPSN. Residues 462 to 504 form an ARM repeat; sequence ESIHCIVQLIGCSDVTIVELATGTLRNIGLHNKMNKAFMVQDG.

As to quaternary structure, interacts (independently of ARM repeat) with nhr-25. Component of the beta-catenin-lit-1 complex (also called the lit-1/wrm-1 complex or the wrm-1/lit-1 kinase complex) at least composed of lit-1 and wrm-1. Interacts (via N-terminus) with lit-1; the interaction is direct and activates lit-1 kinase activity which leads to the phosphorylation of pop-1. This promotes pop-1 interaction with par-5 and translocation of pop-1 from the nucleus to the cytoplasm.

It is found in the cytoplasm. Its subcellular location is the cell cortex. It localises to the nucleus. Its function is as follows. Antagonistic role in the Wnt signaling pathway that operates in embryogenesis. When located at the cortex it has been shown to inhibit Wnt signaling during asymmetric cell division but when relocated to the nucleus it shows positive regulation. Has a role in blastomere signaling during endoderm specification. Component of the beta-catenin-lit-1 complex which promotes phosphorylation, down-regulation and subcellular relocation of pop-1. Within the complex, activates lit-1-dependent kinase activity. Can substitute for bar-1 indicating functional redundancy. Appears to have a role in centrosome positioning and can activation transcription in yeast. Involved in the development of distal tip cells (DTC) by regulating the asymmetric distribution of cye-1 and cki-1 between the daughters of Z1.a and Z4.p cells. The protein is Armadillo repeat-containing protein wrm-1 of Caenorhabditis elegans.